Here is a 76-residue protein sequence, read N- to C-terminus: Large ribosomal subunit protein bL31 (76 aa).

The protein belongs to the bacterial ribosomal protein bL31 family. Type A subfamily. As to quaternary structure, part of the 50S ribosomal subunit.

In terms of biological role, binds the 23S rRNA. The sequence is that of Large ribosomal subunit protein bL31 from Beijerinckia indica subsp. indica (strain ATCC 9039 / DSM 1715 / NCIMB 8712).